A 352-amino-acid chain; its full sequence is Putative killer cell immunoglobulin-like receptor-like protein KIR3DX1 (352 aa).

The N-terminal stretch at 1–16 (MAPKLITVLCLGFCLN) is a signal peptide. 2 Ig-like C2-type domains span residues 17 to 112 (QKIC…NSLK) and 224 to 311 (PSLS…VTRC). 2 cysteine pairs are disulfide-bonded: Cys-49/Cys-94 and Cys-244/Cys-295. Asn-78 carries N-linked (GlcNAc...) asparagine glycosylation.

In terms of tissue distribution, expressed in NK-cells.

The protein localises to the secreted. The protein is Putative killer cell immunoglobulin-like receptor-like protein KIR3DX1 (KIR3DX1) of Homo sapiens (Human).